The sequence spans 217 residues: Elongation factor Ts (217 aa).

Residues 82–85 (TDFV) form an involved in Mg(2+) ion dislocation from EF-Tu region.

The protein belongs to the EF-Ts family.

Its subcellular location is the cytoplasm. Functionally, associates with the EF-Tu.GDP complex and induces the exchange of GDP to GTP. It remains bound to the aminoacyl-tRNA.EF-Tu.GTP complex up to the GTP hydrolysis stage on the ribosome. This chain is Elongation factor Ts, found in Desulforamulus reducens (strain ATCC BAA-1160 / DSM 100696 / MI-1) (Desulfotomaculum reducens).